Reading from the N-terminus, the 563-residue chain is Eukaryotic translation initiation factor 3 subunit D (563 aa).

Positions 95–136 (PGYMRNRNRFNQRGGYRRDNRGGRFQGQGGNMGMQNLSRGRD) are disordered. Residues 294–308 (EFDLLTVGETANDLN) are RNA gate. The interval 528 to 563 (IPNSTFETDEEDDDDDEDDVENDDGDDEKDEGDGED) is disordered. The span at 534 to 563 (ETDEEDDDDDEDDVENDDGDDEKDEGDGED) shows a compositional bias: acidic residues.

The protein belongs to the eIF-3 subunit D family. Component of the eukaryotic translation initiation factor 3 (eIF-3) complex.

The protein resides in the cytoplasm. MRNA cap-binding component of the eukaryotic translation initiation factor 3 (eIF-3) complex, which is involved in protein synthesis of a specialized repertoire of mRNAs and, together with other initiation factors, stimulates binding of mRNA and methionyl-tRNAi to the 40S ribosome. The eIF-3 complex specifically targets and initiates translation of a subset of mRNAs involved in cell proliferation. In the eIF-3 complex, eif3d specifically recognizes and binds the 7-methylguanosine cap of a subset of mRNAs. This chain is Eukaryotic translation initiation factor 3 subunit D, found in Nematostella vectensis (Starlet sea anemone).